A 601-amino-acid polypeptide reads, in one-letter code: Elongation factor 4 (601 aa).

Residues arginine 7–lysine 189 form the tr-type G domain. Residues aspartate 19–threonine 24 and asparagine 136–aspartate 139 each bind GTP.

It belongs to the TRAFAC class translation factor GTPase superfamily. Classic translation factor GTPase family. LepA subfamily.

It localises to the cell inner membrane. It catalyses the reaction GTP + H2O = GDP + phosphate + H(+). Its function is as follows. Required for accurate and efficient protein synthesis under certain stress conditions. May act as a fidelity factor of the translation reaction, by catalyzing a one-codon backward translocation of tRNAs on improperly translocated ribosomes. Back-translocation proceeds from a post-translocation (POST) complex to a pre-translocation (PRE) complex, thus giving elongation factor G a second chance to translocate the tRNAs correctly. Binds to ribosomes in a GTP-dependent manner. The protein is Elongation factor 4 of Xanthomonas campestris pv. campestris (strain ATCC 33913 / DSM 3586 / NCPPB 528 / LMG 568 / P 25).